The chain runs to 1037 residues: Tyrosine-protein kinase-like otk (1037 aa).

The signal sequence occupies residues 1–22; it reads MAALRISVWILVQALMMALVSS. N23 and N39 each carry an N-linked (GlcNAc...) asparagine glycan. Residues 23-582 lie on the Extracellular side of the membrane; it reads NSSHFLQLPQ…GGDGFLVTRA (560 aa). Ig-like C2-type domains follow at residues 25–115, 114–200, 252–366, 369–464, and 469–559; these read SHFL…AKLS, LSVI…RVMS, PEDL…APIN, PGTL…VAIN, and PKFS…VQLV. 4 disulfide bridges follow: C46–C96, C138–C189, C277–C355, and C400–C448. 7 N-linked (GlcNAc...) asparagine glycosylation sites follow: N337, N418, N430, N445, N458, N513, and N525. The cysteines at positions 491 and 543 are disulfide-linked. The chain crosses the membrane as a helical span at residues 583–603; sequence VLITMTVALAYIVLVVGLMLW. At 604–1037 the chain is on the cytoplasmic side; sequence CRYRRQARKA…LSKAMQSLEK (434 aa). Disordered regions lie at residues 618–681 and 719–764; these read LSTK…KKSA and ATGS…KTSM. Residues 653–675 show a composition bias toward polar residues; that stretch reads QSRSKSNGDAQKSDDTACSQQSR. S680 bears the Phosphoserine mark. The Protein kinase; inactive domain maps to 694-1035; that stretch reads LTELIQIGRG…AALSKAMQSL (342 aa). The span at 724-735 shows a compositional bias: basic and acidic residues; that stretch reads SDKDADTEKQHS.

This sequence belongs to the protein kinase superfamily. Tyr protein kinase family. Insulin receptor subfamily. Interacts with plexA; component of a receptor complex that mediates the repulsive signaling in response to Semaphorin ligands.

Its subcellular location is the cell membrane. Its function is as follows. Acts as a calcium-dependent, homophilic cell adhesion molecule that regulates neural recognition during the development of the nervous system. Component of the repulsive Plexin signaling response to regulate motor axon guidance at the embryonic stage. Also component of a receptor complex that is required in the adult visual system to innervate the lamina layer; specific targeting of R1-R6 axons. This chain is Tyrosine-protein kinase-like otk, found in Drosophila ananassae (Fruit fly).